We begin with the raw amino-acid sequence, 192 residues long: Nucleoside triphosphate pyrophosphatase (192 aa).

Residue aspartate 73 is the Proton acceptor of the active site.

The protein belongs to the Maf family. Requires a divalent metal cation as cofactor.

The protein localises to the cytoplasm. It catalyses the reaction a ribonucleoside 5'-triphosphate + H2O = a ribonucleoside 5'-phosphate + diphosphate + H(+). The catalysed reaction is a 2'-deoxyribonucleoside 5'-triphosphate + H2O = a 2'-deoxyribonucleoside 5'-phosphate + diphosphate + H(+). Nucleoside triphosphate pyrophosphatase. May have a dual role in cell division arrest and in preventing the incorporation of modified nucleotides into cellular nucleic acids. In Ehrlichia canis (strain Jake), this protein is Nucleoside triphosphate pyrophosphatase.